Reading from the N-terminus, the 722-residue chain is MFNIHSVEIDWGGRPLKLETGKVARQADGAVVATYGETVVLATVVAAKAPREGVDFLPLTVDYQEKAYAAGRIPGGYFKREGRPTEKETLVSRLIDRPIRPLFADGWRNETQVIVTVLSHDMENDPDVLAMVAASAALTLSGVPFKGPIGAARVGFINDEYVLNPVLDEMAETQLELVVAGTADAVLMVESEAKELSEEIMLGAVMFGHRHFQPVIDAIIDLAEKAAKEPRELTVVDDSEIEKEMLGLVEQELRAAYAIPVKQDRYAAVGKVKEKAIAHFFPEGQEPKYDKLRIAGVFKELEAKIVRWNILDTGKRIDGRDSKTVRNILAQVGVLPRTHGSALFTRGETQAMVVTTLGTGEDEQYVDSLSGTYKETFLLHYNFPPYSVGETGRLGGTKRREIGHGKLAWRAIHPVLPPHHEFPYTIRVVSEITESNGSSSMASVCGASLALMDAGVPLKRPTAGIAMGLILEGERFAVLSDILGDEDHLGDMDFKVAGTEAGITSLQMDIKIAGITEEIMKVALGQAKDGRIHILGEMSKALDRARAELGEHAPRIETFKIPTDKIREVIGTGGKVIREIVEKTGAKVNIEDDGTVKVASSDGESIKAAIKWIKSIASDPEVGEIYEGTVVKVMEFGAFVNFFGAKDGLVHISQLAAGRVQKTSDVVKEGDKVKVKLLGFDDRGKTRLSMKVVDQTTGEDLEAKQKAEAKAEGEAPAQAAGE.

The Mg(2+) site is built by aspartate 487 and aspartate 493. A KH domain is found at 554–613 (PRIETFKIPTDKIREVIGTGGKVIREIVEKTGAKVNIEDDGTVKVASSDGESIKAAIKWI). One can recognise an S1 motif domain in the interval 623–691 (GEIYEGTVVK…DRGKTRLSMK (69 aa)). The segment at 697-722 (TGEDLEAKQKAEAKAEGEAPAQAAGE) is disordered. A compositionally biased stretch (basic and acidic residues) spans 701 to 713 (LEAKQKAEAKAEG).

This sequence belongs to the polyribonucleotide nucleotidyltransferase family. Mg(2+) serves as cofactor.

The protein localises to the cytoplasm. The catalysed reaction is RNA(n+1) + phosphate = RNA(n) + a ribonucleoside 5'-diphosphate. Its function is as follows. Involved in mRNA degradation. Catalyzes the phosphorolysis of single-stranded polyribonucleotides processively in the 3'- to 5'-direction. In Rhodopseudomonas palustris (strain ATCC BAA-98 / CGA009), this protein is Polyribonucleotide nucleotidyltransferase.